Here is a 351-residue protein sequence, read N- to C-terminus: Nicotinate-nucleotide--dimethylbenzimidazole phosphoribosyltransferase (351 aa).

Glutamate 315 functions as the Proton acceptor in the catalytic mechanism.

This sequence belongs to the CobT family.

It carries out the reaction 5,6-dimethylbenzimidazole + nicotinate beta-D-ribonucleotide = alpha-ribazole 5'-phosphate + nicotinate + H(+). It functions in the pathway nucleoside biosynthesis; alpha-ribazole biosynthesis; alpha-ribazole from 5,6-dimethylbenzimidazole: step 1/2. Functionally, catalyzes the synthesis of alpha-ribazole-5'-phosphate from nicotinate mononucleotide (NAMN) and 5,6-dimethylbenzimidazole (DMB). In Acetivibrio thermocellus (strain ATCC 27405 / DSM 1237 / JCM 9322 / NBRC 103400 / NCIMB 10682 / NRRL B-4536 / VPI 7372) (Clostridium thermocellum), this protein is Nicotinate-nucleotide--dimethylbenzimidazole phosphoribosyltransferase.